A 232-amino-acid polypeptide reads, in one-letter code: MAKGHKSKLQSDALRQYILETSVYPREPESMKELREVTAKHPWNLMRTSADEGQFLNMSLKLINAKNTMEIGVYTDYSLLATALAIPDDGKILAMDINRENYEIGLPKIEKAGVAHRIQFREGPALPVLDQLVEDKKNHGTYDFIFVDADKDNYINYHKRIIDLVKVGGLIGYDNTLWNGSVVGPPDAPMRKYLRYCRDFVLELIKALAVDPRIEICMLPVGDGITLSRRIT.

Lys6 provides a ligand contact to substrate. Residues Thr48, Glu70, 72–73 (GV), Ser78, Asp96, and Ala125 each bind S-adenosyl-L-methionine. Asp148 contacts substrate. Asp148 is a binding site for a divalent metal cation. Asp150 is a binding site for S-adenosyl-L-methionine. Positions 174 and 175 each coordinate a divalent metal cation. Position 179 (Asn179) interacts with substrate.

The protein belongs to the class I-like SAM-binding methyltransferase superfamily. Cation-dependent O-methyltransferase family. CCoAMT subfamily. It depends on a divalent metal cation as a cofactor.

The enzyme catalyses (E)-caffeoyl-CoA + S-adenosyl-L-methionine = (E)-feruloyl-CoA + S-adenosyl-L-homocysteine + H(+). The protein operates within aromatic compound metabolism; phenylpropanoid biosynthesis. In terms of biological role, methylates caffeoyl-CoA to feruloyl-CoA and 5-hydroxyferuloyl-CoA to sinapoyl-CoA. Plays a role in the synthesis of feruloylated polysaccharides. Involved in the reinforcement of the plant cell wall. Also involved in the responding to wounding or pathogen challenge by the increased formation of cell wall-bound ferulic acid polymers. This chain is Caffeoyl-CoA O-methyltransferase, found in Citrus natsudaidai (Natsudaidai orange).